The primary structure comprises 372 residues: 4-hydroxy-3-methylbut-2-en-1-yl diphosphate synthase (flavodoxin) (372 aa).

[4Fe-4S] cluster-binding residues include cysteine 270, cysteine 273, cysteine 305, and glutamate 312.

The protein belongs to the IspG family. Requires [4Fe-4S] cluster as cofactor.

It catalyses the reaction (2E)-4-hydroxy-3-methylbut-2-enyl diphosphate + oxidized [flavodoxin] + H2O + 2 H(+) = 2-C-methyl-D-erythritol 2,4-cyclic diphosphate + reduced [flavodoxin]. It functions in the pathway isoprenoid biosynthesis; isopentenyl diphosphate biosynthesis via DXP pathway; isopentenyl diphosphate from 1-deoxy-D-xylulose 5-phosphate: step 5/6. In terms of biological role, converts 2C-methyl-D-erythritol 2,4-cyclodiphosphate (ME-2,4cPP) into 1-hydroxy-2-methyl-2-(E)-butenyl 4-diphosphate. The polypeptide is 4-hydroxy-3-methylbut-2-en-1-yl diphosphate synthase (flavodoxin) (Shigella boydii serotype 18 (strain CDC 3083-94 / BS512)).